Consider the following 660-residue polypeptide: Phosphatidylinositol-3-phosphate phosphatase MTMR7 (660 aa).

In terms of domain architecture, Myotubularin phosphatase spans 126-504 (GWVLIDLSEE…FMYKFWSGMY (379 aa)). A 1,2-diacyl-sn-glycero-3-phospho-(1D-myo-inositol-3-phosphate) is bound by residues asparagine 250, asparagine 275, and isoleucine 276. The active-site Phosphocysteine intermediate is the cysteine 338. A 1,2-diacyl-sn-glycero-3-phospho-(1D-myo-inositol-3-phosphate) contacts are provided by serine 339, aspartate 340, glycine 341, tryptophan 342, aspartate 343, arginine 344, and arginine 384. The stretch at 521–551 (LMAVKEETQQLEEELEALEERLEKIQKVQLN) forms a coiled coil. Residues 554–660 (KVKSKQSEPS…DSDEAVFLTA (107 aa)) form a disordered region. A compositionally biased stretch (polar residues) spans 566–596 (SGFSTSDNSIANTPQDYSGNMKSFPSRSPSQ). Position 578 is a phosphothreonine (threonine 578). The segment covering 641 to 653 (APSEDSGKDRDSD) has biased composition (basic and acidic residues).

Belongs to the protein-tyrosine phosphatase family. Non-receptor class myotubularin subfamily. Heterodimer (via C-terminus) with MTMR9 (via coiled coil domain); the interaction enhances MTMR7 catalytic activity. Does not homodimerize. Interacts with RAB1B (in GDP-bound form). In terms of tissue distribution, expressed specifically in brain.

The protein localises to the cytoplasm. The protein resides in the endomembrane system. It catalyses the reaction a 1,2-diacyl-sn-glycero-3-phospho-(1D-myo-inositol-3-phosphate) + H2O = a 1,2-diacyl-sn-glycero-3-phospho-(1D-myo-inositol) + phosphate. It carries out the reaction 1D-myo-inositol 1,3-bisphosphate + H2O = 1D-myo-inositol 1-phosphate + phosphate. Interaction with MTMR9 increases phosphatase activity. Lipid phosphatase that specifically dephosphorylates the D-3 position of phosphatidylinositol 3-phosphate (PtdIns(3)P) and inositol 1,3-bisphosphate (Ins(1,3)P2). In Homo sapiens (Human), this protein is Phosphatidylinositol-3-phosphate phosphatase MTMR7.